The sequence spans 376 residues: Ribonucleoside-diphosphate reductase subunit beta (376 aa).

Residues D85, E116, and H119 each contribute to the Fe cation site. Residue Y123 is part of the active site. Fe cation contacts are provided by E205, E239, and H242.

It belongs to the ribonucleoside diphosphate reductase small chain family. As to quaternary structure, tetramer of two alpha and two beta subunits. It depends on Fe cation as a cofactor.

It catalyses the reaction a 2'-deoxyribonucleoside 5'-diphosphate + [thioredoxin]-disulfide + H2O = a ribonucleoside 5'-diphosphate + [thioredoxin]-dithiol. In terms of biological role, provides the precursors necessary for DNA synthesis. Catalyzes the biosynthesis of deoxyribonucleotides from the corresponding ribonucleotides. The protein is Ribonucleoside-diphosphate reductase subunit beta (nrdB) of Buchnera aphidicola subsp. Baizongia pistaciae (strain Bp).